The sequence spans 512 residues: Rab11 family-interacting protein 2 (512 aa).

Residues 1-120 (MMLSEQAQKW…DKQRRKTEWF (120 aa)) form the C2 domain. Residues 15-102 (VQVTVLQAKD…GLDKFLGQVA (88 aa)) are necessary for its cellular translocation to the plasma membrane. Disordered stretches follow at residues 169-239 (DKMK…MSSE) and 262-285 (VPESGSLKSPHRRTLSFDTSKMNQ). Positions 178–188 (GTFSDTSSAII) are enriched in polar residues. Low complexity predominate over residues 226-236 (HSMSDLSGSHM). Residue Ser227 is modified to Phosphoserine; by MARK2. At Ser277 the chain carries Phosphoserine. Positions 323–325 (NPF) match the NPF 1 motif. Residues 361-374 (ERVTGKKDSRRSDK) are compositionally biased toward basic and acidic residues. The disordered stretch occupies residues 361–392 (ERVTGKKDSRRSDKLNNGGSDSPCDLKSPNAF). Short sequence motifs (NPF) lie at residues 406–408 (NPF) and 440–442 (NPF). The 63-residue stretch at 437–499 (PDSNPFDATA…EETPSILRVP (63 aa)) folds into the FIP-RBD domain. Positions 465 to 512 (ELLRRKDTHIRELEDYIDNLLVRVMEETPSILRVPYEPSRKAGKFSNS) are necessary for interaction with AP2A1, RAB11A, subcellular location, endocytosis activity and homooligomerization.

In terms of assembly, homooligomerizes in a Rab11-independent manner. Forms a heterooligomeric complex with RAB11FIP4. Interacts with AP2A1, MYO5B, RAB25 and REPS1. Interacts with RAB11A and RAB11B (activated GTP-bound form). Interacts with NPC1L1. Interacts (via NPF motifs) with EHD1 and EHD3. Interacts with TICAM2; this interaction directs RAB11FIP2 to the phagosome. Interacts with RAB14 and RAB25 (GTP-bound forms). Post-translationally, phosphorylation at Ser-227 by MARK2 regulates epithelial cell polarity.

The protein resides in the cell projection. It is found in the phagocytic cup. The protein localises to the cell membrane. Its subcellular location is the recycling endosome membrane. Its function is as follows. A Rab11 effector binding preferentially phosphatidylinositol 3,4,5-trisphosphate (PtdInsP3) and phosphatidic acid (PA) and acting in the regulation of the transport of vesicles from the endosomal recycling compartment (ERC) to the plasma membrane. Involved in insulin granule exocytosis. Also involved in receptor-mediated endocytosis and membrane trafficking of recycling endosomes, probably originating from clathrin-coated vesicles. Required in a complex with MYO5B and RAB11 for the transport of NPC1L1 to the plasma membrane. Also acts as a regulator of cell polarity. Plays an essential role in phagocytosis through a mechanism involving TICAM2, RAC1 and CDC42 Rho GTPases for controlling actin-dynamics. In Homo sapiens (Human), this protein is Rab11 family-interacting protein 2 (RAB11FIP2).